The sequence spans 84 residues: uncharacterized protein (84 aa).

This protein may be involved in virus assembly. This is an uncharacterized protein from Saccharolobus solfataricus (Sulfolobus solfataricus).